Reading from the N-terminus, the 270-residue chain is Tryptophan synthase alpha chain (270 aa).

Active-site proton acceptor residues include E49 and D60.

The protein belongs to the TrpA family. As to quaternary structure, tetramer of two alpha and two beta chains.

It carries out the reaction (1S,2R)-1-C-(indol-3-yl)glycerol 3-phosphate + L-serine = D-glyceraldehyde 3-phosphate + L-tryptophan + H2O. The protein operates within amino-acid biosynthesis; L-tryptophan biosynthesis; L-tryptophan from chorismate: step 5/5. Its function is as follows. The alpha subunit is responsible for the aldol cleavage of indoleglycerol phosphate to indole and glyceraldehyde 3-phosphate. In Buchnera aphidicola subsp. Diuraphis noxia, this protein is Tryptophan synthase alpha chain.